A 431-amino-acid polypeptide reads, in one-letter code: Bifunctional protein GlmU (431 aa).

The pyrophosphorylase stretch occupies residues methionine 1–lysine 223. UDP-N-acetyl-alpha-D-glucosamine contacts are provided by residues leucine 8–glycine 11, lysine 22, glutamine 74, and glycine 81–threonine 82. Aspartate 102 serves as a coordination point for Mg(2+). 4 residues coordinate UDP-N-acetyl-alpha-D-glucosamine: glycine 135, glutamate 149, asparagine 164, and asparagine 221. Asparagine 221 lines the Mg(2+) pocket. Positions alanine 224–glutamate 244 are linker. An N-acetyltransferase region spans residues glycine 245–lysine 431. Arginine 308 and lysine 325 together coordinate UDP-N-acetyl-alpha-D-glucosamine. Catalysis depends on histidine 336, which acts as the Proton acceptor. UDP-N-acetyl-alpha-D-glucosamine-binding residues include tyrosine 339 and asparagine 350. Acetyl-CoA-binding positions include alanine 353, asparagine 359–tyrosine 360, serine 378, alanine 396, and arginine 413.

It in the N-terminal section; belongs to the N-acetylglucosamine-1-phosphate uridyltransferase family. This sequence in the C-terminal section; belongs to the transferase hexapeptide repeat family. Homotrimer. Mg(2+) serves as cofactor.

The protein localises to the cytoplasm. It catalyses the reaction alpha-D-glucosamine 1-phosphate + acetyl-CoA = N-acetyl-alpha-D-glucosamine 1-phosphate + CoA + H(+). The catalysed reaction is N-acetyl-alpha-D-glucosamine 1-phosphate + UTP + H(+) = UDP-N-acetyl-alpha-D-glucosamine + diphosphate. The protein operates within nucleotide-sugar biosynthesis; UDP-N-acetyl-alpha-D-glucosamine biosynthesis; N-acetyl-alpha-D-glucosamine 1-phosphate from alpha-D-glucosamine 6-phosphate (route II): step 2/2. It functions in the pathway nucleotide-sugar biosynthesis; UDP-N-acetyl-alpha-D-glucosamine biosynthesis; UDP-N-acetyl-alpha-D-glucosamine from N-acetyl-alpha-D-glucosamine 1-phosphate: step 1/1. It participates in bacterial outer membrane biogenesis; LPS lipid A biosynthesis. Functionally, catalyzes the last two sequential reactions in the de novo biosynthetic pathway for UDP-N-acetylglucosamine (UDP-GlcNAc). The C-terminal domain catalyzes the transfer of acetyl group from acetyl coenzyme A to glucosamine-1-phosphate (GlcN-1-P) to produce N-acetylglucosamine-1-phosphate (GlcNAc-1-P), which is converted into UDP-GlcNAc by the transfer of uridine 5-monophosphate (from uridine 5-triphosphate), a reaction catalyzed by the N-terminal domain. This is Bifunctional protein GlmU from Wolinella succinogenes (strain ATCC 29543 / DSM 1740 / CCUG 13145 / JCM 31913 / LMG 7466 / NCTC 11488 / FDC 602W) (Vibrio succinogenes).